The sequence spans 359 residues: Ni-sirohydrochlorin a,c-diamide reductive cyclase complex, component CfbD (359 aa).

It belongs to the NifD/NifK/NifE/NifN family. As to quaternary structure, homodimer or monomer. The Ni-sirohydrochlorin a,c-diamide reductive cyclase complex is composed of a NifH homolog component CfbC and a NifD homolog component CfbD. The cofactor is [4Fe-4S] cluster.

The enzyme catalyses Ni-sirohydrochlorin a,c-diamide + 3 AH2 + ATP + H2O = 15,17(3)-seco-F430-17(3)-acid + 3 A + ADP + phosphate. Its function is as follows. Involved in the biosynthesis of the unique nickel-containing tetrapyrrole coenzyme F430, the prosthetic group of methyl-coenzyme M reductase (MCR), which plays a key role in methanogenesis and anaerobic methane oxidation. Catalyzes both the six-electron reduction of the tetrahydroporphyrin ring system and the gamma-lactamization of the c-acetamide side chain of Ni-sirohydrochlorin a,c-diamide to yield 15,17(3)-seco-F430-17(3)-acid (seco-F430), the last intermediate in the biosynthesis of the coenzyme F430. This Methanothermobacter thermautotrophicus (strain ATCC 29096 / DSM 1053 / JCM 10044 / NBRC 100330 / Delta H) (Methanobacterium thermoautotrophicum) protein is Ni-sirohydrochlorin a,c-diamide reductive cyclase complex, component CfbD.